Consider the following 89-residue polypeptide: Small ribosomal subunit protein uS15 (89 aa).

The protein belongs to the universal ribosomal protein uS15 family. As to quaternary structure, part of the 30S ribosomal subunit. Forms a bridge to the 50S subunit in the 70S ribosome, contacting the 23S rRNA.

Its function is as follows. One of the primary rRNA binding proteins, it binds directly to 16S rRNA where it helps nucleate assembly of the platform of the 30S subunit by binding and bridging several RNA helices of the 16S rRNA. Functionally, forms an intersubunit bridge (bridge B4) with the 23S rRNA of the 50S subunit in the ribosome. The polypeptide is Small ribosomal subunit protein uS15 (Chlamydia muridarum (strain MoPn / Nigg)).